A 367-amino-acid polypeptide reads, in one-letter code: TATA-box-binding protein-like (367 aa).

The interval 1–26 is disordered; the sequence is MKKQSKTHKVDYKYYNSGSKTSRNRN. Positions 16-26 are enriched in polar residues; sequence NSGSKTSRNRN.

The protein belongs to the TBP family.

This chain is TATA-box-binding protein-like, found in Acanthamoeba polyphaga (Amoeba).